Consider the following 368-residue polypeptide: Probable dual-specificity RNA methyltransferase RlmN (368 aa).

Glutamate 109 functions as the Proton acceptor in the catalytic mechanism. The region spanning 115 to 355 is the Radical SAM core domain; the sequence is YPDRVTMCIS…VTVRDTRGQE (241 aa). An intrachain disulfide couples cysteine 122 to cysteine 360. [4Fe-4S] cluster is bound by residues cysteine 129, cysteine 133, and cysteine 136. S-adenosyl-L-methionine contacts are provided by residues 184-185, serine 218, 241-243, and asparagine 317; these read GE and SLH. Cysteine 360 functions as the S-methylcysteine intermediate in the catalytic mechanism.

This sequence belongs to the radical SAM superfamily. RlmN family. It depends on [4Fe-4S] cluster as a cofactor.

Its subcellular location is the cytoplasm. The catalysed reaction is adenosine(2503) in 23S rRNA + 2 reduced [2Fe-2S]-[ferredoxin] + 2 S-adenosyl-L-methionine = 2-methyladenosine(2503) in 23S rRNA + 5'-deoxyadenosine + L-methionine + 2 oxidized [2Fe-2S]-[ferredoxin] + S-adenosyl-L-homocysteine. The enzyme catalyses adenosine(37) in tRNA + 2 reduced [2Fe-2S]-[ferredoxin] + 2 S-adenosyl-L-methionine = 2-methyladenosine(37) in tRNA + 5'-deoxyadenosine + L-methionine + 2 oxidized [2Fe-2S]-[ferredoxin] + S-adenosyl-L-homocysteine. Functionally, specifically methylates position 2 of adenine 2503 in 23S rRNA and position 2 of adenine 37 in tRNAs. The protein is Probable dual-specificity RNA methyltransferase RlmN of Streptomyces griseus subsp. griseus (strain JCM 4626 / CBS 651.72 / NBRC 13350 / KCC S-0626 / ISP 5235).